The chain runs to 421 residues: UDP-N-acetylglucosamine 1-carboxyvinyltransferase (421 aa).

22–23 (KN) contacts phosphoenolpyruvate. Arg94 lines the UDP-N-acetyl-alpha-D-glucosamine pocket. Cys118 acts as the Proton donor in catalysis. Cys118 is subject to 2-(S-cysteinyl)pyruvic acid O-phosphothioketal. UDP-N-acetyl-alpha-D-glucosamine is bound by residues 163–166 (KVSV), Asp308, and Ile330.

The protein belongs to the EPSP synthase family. MurA subfamily.

It localises to the cytoplasm. The enzyme catalyses phosphoenolpyruvate + UDP-N-acetyl-alpha-D-glucosamine = UDP-N-acetyl-3-O-(1-carboxyvinyl)-alpha-D-glucosamine + phosphate. Its pathway is cell wall biogenesis; peptidoglycan biosynthesis. Its function is as follows. Cell wall formation. Adds enolpyruvyl to UDP-N-acetylglucosamine. In Orientia tsutsugamushi (strain Ikeda) (Rickettsia tsutsugamushi), this protein is UDP-N-acetylglucosamine 1-carboxyvinyltransferase.